The sequence spans 92 residues: Sec-independent protein translocase protein TatA (92 aa).

Residues 2–22 (IPANFGGTELIILLVIILLLF) traverse the membrane as a helical segment. Residues 43–92 (KGTSGAYEELEEKKGEEEKDEGGKKEAEASGRGEEEQQARAAGEAGRKQG) are disordered. Residues 53–80 (EEKKGEEEKDEGGKKEAEASGRGEEEQQ) show a composition bias toward basic and acidic residues.

Belongs to the TatA/E family. In terms of assembly, the Tat system comprises two distinct complexes: a TatABC complex, containing multiple copies of TatA, TatB and TatC subunits, and a separate TatA complex, containing only TatA subunits. Substrates initially bind to the TatABC complex, which probably triggers association of the separate TatA complex to form the active translocon.

Its subcellular location is the cell membrane. Its function is as follows. Part of the twin-arginine translocation (Tat) system that transports large folded proteins containing a characteristic twin-arginine motif in their signal peptide across membranes. TatA could form the protein-conducting channel of the Tat system. This chain is Sec-independent protein translocase protein TatA, found in Rubrobacter xylanophilus (strain DSM 9941 / JCM 11954 / NBRC 16129 / PRD-1).